The primary structure comprises 447 residues: Maintenance of mitochondrial morphology protein 1 (447 aa).

Topologically, residues 1–109 are lumenal; the sequence is MKSPNETSFT…VFSAWSFAQG (109 aa). The chain crosses the membrane as a helical span at residues 110 to 130; that stretch reads LVIGQLSVIVVLIFFIKFFIF. The Cytoplasmic segment spans residues 131 to 447; sequence SEGPIKTEGP…DDISMKSTDL (317 aa). The SMP-LTD domain maps to 208-421; it reads SPETLDWFNV…EPRFQFIKLP (214 aa).

This sequence belongs to the MMM1 family. Homodimer. Component of the ER-mitochondria encounter structure (ERMES) or MDM complex, composed of MMM1, MDM10, MDM12 and MDM34. An MMM1 homodimer associates with one molecule of MDM12 on each side in a pairwise head-to-tail manner, and the SMP-LTD domains of MMM1 and MDM12 generate a continuous hydrophobic tunnel for phospholipid trafficking.

The protein localises to the endoplasmic reticulum membrane. Component of the ERMES/MDM complex, which serves as a molecular tether to connect the endoplasmic reticulum (ER) and mitochondria. Components of this complex are involved in the control of mitochondrial shape and protein biogenesis, and function in nonvesicular lipid trafficking between the ER and mitochondria. The MDM12-MMM1 subcomplex functions in the major beta-barrel assembly pathway that is responsible for biogenesis of all outer membrane beta-barrel proteins, and acts in a late step after the SAM complex. The MDM10-MDM12-MMM1 subcomplex further acts in the TOM40-specific pathway after the action of the MDM12-MMM1 complex. Essential for establishing and maintaining the structure of mitochondria and maintenance of mtDNA nucleoids. This Lachancea thermotolerans (strain ATCC 56472 / CBS 6340 / NRRL Y-8284) (Yeast) protein is Maintenance of mitochondrial morphology protein 1.